A 127-amino-acid chain; its full sequence is Ribosome-binding factor A (127 aa).

Belongs to the RbfA family. As to quaternary structure, monomer. Binds 30S ribosomal subunits, but not 50S ribosomal subunits or 70S ribosomes.

Its subcellular location is the cytoplasm. One of several proteins that assist in the late maturation steps of the functional core of the 30S ribosomal subunit. Associates with free 30S ribosomal subunits (but not with 30S subunits that are part of 70S ribosomes or polysomes). Required for efficient processing of 16S rRNA. May interact with the 5'-terminal helix region of 16S rRNA. This Actinobacillus pleuropneumoniae serotype 7 (strain AP76) protein is Ribosome-binding factor A.